Consider the following 435-residue polypeptide: RuBisCO large subunit-binding protein subunit beta-1 (435 aa).

Belongs to the chaperonin (HSP60) family. Oligomer of probably six alpha and six beta subunits.

It localises to the plastid. Its subcellular location is the chloroplast. Its function is as follows. This protein binds RuBisCO small and large subunits and is implicated in the assembly of the enzyme oligomer. The chain is RuBisCO large subunit-binding protein subunit beta-1 from Chlamydomonas reinhardtii (Chlamydomonas smithii).